The primary structure comprises 21 residues: SVTADNASETKVREIGQEKSS.

The tract at residues 1–21 (SVTADNASETKVREIGQEKSS) is disordered. Residues 8–21 (SETKVREIGQEKSS) are compositionally biased toward basic and acidic residues.

This sequence belongs to the bacterial/plant glucose-1-phosphate adenylyltransferase family. As to quaternary structure, heterotetramer.

It is found in the plastid. It localises to the chloroplast. The protein resides in the amyloplast. It carries out the reaction alpha-D-glucose 1-phosphate + ATP + H(+) = ADP-alpha-D-glucose + diphosphate. It participates in glycan biosynthesis; starch biosynthesis. Its activity is regulated as follows. Activated by 3'phosphoglycerate, inhibited by orthophosphate. Allosteric regulation. Its function is as follows. This protein plays a role in synthesis of starch. It catalyzes the synthesis of the activated glycosyl donor, ADP-glucose from Glc-1-P and ATP. The chain is Glucose-1-phosphate adenylyltransferase large subunit from Spinacia oleracea (Spinach).